Reading from the N-terminus, the 137-residue chain is MRILWIVAVCLIGVEGNLYQFGKMIFKMTRKSALSYSDYGCYCGWGGKGKPQDATDRCCFVHDCCYGTVNGCDPKLSTYSYSFQNGDIVCGGDDPCLRAVCECDRVAAICFGENMNTYDTKYMLHSLFDCMEESEKC.

An N-terminal signal peptide occupies residues 1 to 16; the sequence is MRILWIVAVCLIGVEG. 7 disulfide bridges follow: Cys41–Cys130, Cys43–Cys59, Cys58–Cys110, Cys64–Cys137, Cys65–Cys103, Cys72–Cys96, and Cys90–Cys101. Residues Tyr42, Gly44, and Gly46 each contribute to the Ca(2+) site. Residue His62 is part of the active site. Asp63 lines the Ca(2+) pocket. Residue Asp104 is part of the active site.

This sequence belongs to the phospholipase A2 family. Group II subfamily. D49 sub-subfamily. In terms of assembly, does not form a complex. Ca(2+) is required as a cofactor. In terms of tissue distribution, expressed by the venom gland.

The protein localises to the secreted. It catalyses the reaction a 1,2-diacyl-sn-glycero-3-phosphocholine + H2O = a 1-acyl-sn-glycero-3-phosphocholine + a fatty acid + H(+). In terms of biological role, snake venom phospholipase A2 (PLA2) that is not toxic by itself, but the synergistical mixture of a basic and this acidic protein is lethal. PLA2 catalyzes the calcium-dependent hydrolysis of the 2-acyl groups in 3-sn-phosphoglycerides. The sequence is that of Acidic phospholipase A2 VP8 from Daboia palaestinae (Palestine viper).